Reading from the N-terminus, the 1100-residue chain is Exportin-T (1100 aa).

It belongs to the exportin family. In terms of assembly, interacts with GSP1, GSP2, NSP1, NUP2 and UTP8.

It is found in the nucleus. Its subcellular location is the cytoplasm. Functionally, tRNA nucleus export receptor which facilitates tRNA translocation across the nuclear pore complex. Preferentially interacts with tRNAs with mature 5'- and 3'-termini and does not distinguish between intron-containing and spliced tRNAs. In the nucleus binds to tRNA and to the Ran-GTPases GSP1 or GSP2 in their active GTP-bound form. Docking of this trimeric complex to the nuclear pore complex (NPC) is mediated through binding to nucleoporins. Upon transit of a nuclear export complex into the cytoplasm, disassembling of the complex and hydrolysis of Ran-GTP to Ran-GDP cause release of the tRNA from the export receptor. The directionality of nuclear export is thought to be conferred by an asymmetric distribution of the GTP- and GDP-bound forms of Ran between the cytoplasm and nucleus. Involved in pre-tRNA splicing, probably by affecting the interaction of pre-tRNA with splicing endonuclease. This is Exportin-T (LOS1) from Saccharomyces cerevisiae (strain YJM789) (Baker's yeast).